We begin with the raw amino-acid sequence, 405 residues long: Phosphopentomutase (405 aa).

Mn(2+) contacts are provided by Asp10, Asp305, His310, Asp346, His347, and His358.

The protein belongs to the phosphopentomutase family. Requires Mn(2+) as cofactor.

The protein localises to the cytoplasm. The catalysed reaction is 2-deoxy-alpha-D-ribose 1-phosphate = 2-deoxy-D-ribose 5-phosphate. It carries out the reaction alpha-D-ribose 1-phosphate = D-ribose 5-phosphate. The protein operates within carbohydrate degradation; 2-deoxy-D-ribose 1-phosphate degradation; D-glyceraldehyde 3-phosphate and acetaldehyde from 2-deoxy-alpha-D-ribose 1-phosphate: step 1/2. Functionally, isomerase that catalyzes the conversion of deoxy-ribose 1-phosphate (dRib-1-P) and ribose 1-phosphate (Rib-1-P) to deoxy-ribose 5-phosphate (dRib-5-P) and ribose 5-phosphate (Rib-5-P), respectively. The polypeptide is Phosphopentomutase (Methylobacterium sp. (strain 4-46)).